Reading from the N-terminus, the 565-residue chain is Nephronectin (565 aa).

The N-terminal stretch at 1-19 is a signal peptide; the sequence is MDFLLALVLVSSLYLQAAA. The EGF-like 1 domain occupies 52 to 87; it reads SWGQCQPVCQPRCKHGECIGPNKCKCHPGYAGKTCN. Disulfide bonds link C56-C69, C60-C75, C77-C86, C93-C104, C100-C113, and C115-C127. The region spanning 89–128 is the EGF-like 2; calcium-binding domain; that stretch reads DLNECGLKPRPCKHRCMNTYGSYKCYCLNGYMLMPDGSCS. Residues 132 to 168 enclose the EGF-like 3 domain; sequence TCSMANCQYGCDVVKGQIRCQCPSPGLQLAPDGRTCV. Residues 169–213 form the EGF-like 4; calcium-binding domain; sequence DVDECATGRASCPRFRQCVNTFGSYICKCHKGFNLMYIGGKYQCH. Cystine bridges form between C173–C186, C180–C195, C197–C212, C218–C231, C225–C240, and C242–C253. The region spanning 214–254 is the EGF-like 5; calcium-binding domain; it reads DIDECSLGQYQCSSFARCYNIHGSYKCKCKEGYQGDGLTCV. A disordered region spans residues 301–373; the sequence is YIPPIITNRP…PPGGITVDNR (73 aa). The segment covering 304-316 has biased composition (low complexity); sequence PIITNRPTSKPTT. The span at 317–349 shows a compositional bias: pro residues; that stretch reads RPTPKPTPIPTPPPPPPLPTELRTPLPPTTPER. Positions 382–384 match the Integrin interaction motif; it reads RGD. The region spanning 420-563 is the MAM domain; it reads HSCNFDHGLC…VSLKKGHCSE (144 aa).

It belongs to the nephronectin family. In terms of assembly, homodimer and homotrimer.

The protein resides in the secreted. It is found in the extracellular space. The protein localises to the extracellular matrix. Functionally, functional ligand of integrin alpha-8/beta-1 in kidney development. Regulates the expression of GDNF with integrin alpha-8/beta-1 which is essential for kidney development. May also play a role in the development and function of various tissues, regulating cell adhesion, spreading and survival through the binding of several integrins. This Pongo abelii (Sumatran orangutan) protein is Nephronectin (NPNT).